Reading from the N-terminus, the 264-residue chain is Short-chain dehydrogenase/reductase ucsE (264 aa).

The helical transmembrane segment at Leu-13–Val-32 threads the bilayer. Leu-23, Ser-43, and Asp-74 together coordinate NADP(+). An N-linked (GlcNAc...) asparagine glycan is attached at Asn-125. Residues Arg-130 and Lys-139 each contribute to the NADP(+) site. Ser-157 (proton donor) is an active-site residue. NADP(+) contacts are provided by Val-202 and Thr-204.

This sequence belongs to the short-chain dehydrogenases/reductases (SDR) family. It depends on NADP(+) as a cofactor.

It is found in the membrane. The protein operates within mycotoxin biosynthesis. Short-chain dehydrogenase/reductase; part of the gene cluster that mediates the biosynthesis of UCS1025A, a member of the pyrrolizidinone family that acts as a strong telomerase inhibitor and displays potent antibacterial and antitumor properties. These compounds share a hemiaminal-containing pyrrolizidinone core fused with a gamma-lactone, giving a furopyrrolizidine that is connected to a decalin fragment. The polyketide synthase module (PKS) of the PKS-NRPS ucsA is responsible for the synthesis of the polyketide backbone via the condensation of an acetyl-CoA starter unit with 6 malonyl-CoA units. The downstream nonribosomal peptide synthetase (NRPS) module then amidates the carboxyl end of the polyketide with a 2S,3S-methylproline derived from L-isoleucine by the 2-oxoglutarate-dependent dioxygenase ucsF which converts L-isoleucine to (4S,5S)-4-methylpyrroline-5-carboxylate that is further converted to 2S,3S-methylproline by the pyrroline-5-carboxylate reductase ucsG. Reductive release of the completed aminoacyl polyketide from the assembly line can form the 3-pyrrolin-2-one structure via an intramolecular Knoevenagel reaction. Because ucsA lacks a designated enoylreductase (ER) domain, the required activity is provided the enoyl reductase ucsL. This keto acyclic precursor is the substrate of the Diels-Alderase ucsH, that catalyzes the Diels-Alder cycloaddition. Oxidation of the 3S-methyl group to a carboxylate by the cytochrome P450 monooxygenase ucsK allows an oxa-Michael cyclization that might involve the reductase/dehydrogenase ucsI and which furnishes the furopyrrolizidine. The oxidase ucsJ likely plays a critical role in stereoselective reduction of the C5-C6 double bond to afford the required R-configured carboxylate group. Further enolization and oxidation at C5 by an unidentified enzyme affords the last intermediate that can undergo oxa-Michael cyclization to yield UCS1025A. The polypeptide is Short-chain dehydrogenase/reductase ucsE (Acremonium sp).